Consider the following 149-residue polypeptide: Large ribosomal subunit protein eL19 (149 aa).

The interval 45–94 (VADGTIDAEDTQGNSRGRARERDAKESYGHKKGAGSRKGKAGARQNEKRE) is disordered. The segment covering 62–73 (RARERDAKESYG) has biased composition (basic and acidic residues). A compositionally biased stretch (basic residues) spans 74 to 85 (HKKGAGSRKGKA).

Belongs to the eukaryotic ribosomal protein eL19 family. As to quaternary structure, part of the 50S ribosomal subunit.

Functionally, binds to the 23S rRNA. This is Large ribosomal subunit protein eL19 from Halobacterium salinarum (strain ATCC 700922 / JCM 11081 / NRC-1) (Halobacterium halobium).